The chain runs to 460 residues: UDP-N-acetylmuramate--L-alanine ligase (460 aa).

Position 116–122 (116–122 (GSHGKTT)) interacts with ATP.

The protein belongs to the MurCDEF family.

Its subcellular location is the cytoplasm. The enzyme catalyses UDP-N-acetyl-alpha-D-muramate + L-alanine + ATP = UDP-N-acetyl-alpha-D-muramoyl-L-alanine + ADP + phosphate + H(+). It participates in cell wall biogenesis; peptidoglycan biosynthesis. Functionally, cell wall formation. The polypeptide is UDP-N-acetylmuramate--L-alanine ligase (Caldanaerobacter subterraneus subsp. tengcongensis (strain DSM 15242 / JCM 11007 / NBRC 100824 / MB4) (Thermoanaerobacter tengcongensis)).